Consider the following 363-residue polypeptide: Adenosine deaminase (363 aa).

Zn(2+) is bound by residues His-42 and His-44. A purine D-ribonucleoside is bound by residues 44-46 (HLD), Asp-172, and Gly-201. The gating helix loop; regulates binding affinity for substrates and thus substrate selectivity stretch occupies residues 170 to 184 (IGDTGHEAANIKASA). Position 226 (His-226) interacts with Zn(2+). The a purine D-ribonucleoside site is built by Glu-229, His-253, and Asp-310. Asp-310 provides a ligand contact to Zn(2+).

This sequence belongs to the metallo-dependent hydrolases superfamily. Adenosine and AMP deaminases family. Requires Zn(2+) as cofactor.

The enzyme catalyses adenosine + H2O + H(+) = inosine + NH4(+). It carries out the reaction S-methyl-5'-thioadenosine + H2O + H(+) = S-methyl-5'-thioinosine + NH4(+). It participates in purine metabolism; purine nucleoside salvage. Inhibited by coformycin and methylthiocoformycin (MT-coformycin). Catalyzes the hydrolytic deamination of adenosine to produce inosine. Unlike mammalian adenosine deaminases, also catalyzes the deamination of 5'-methylthioadenosine (MTA), a by-product of polyamine biosynthesis, to produce 5'-methylthioinosine (MTI). Plays an essential role in the purine salvage pathway which allows the parasite to use host cell purines for the synthesis of nucleic acids. The protein is Adenosine deaminase of Plasmodium vivax (strain Salvador I).